Here is a 926-residue protein sequence, read N- to C-terminus: Centrosomal protein of 104 kDa (926 aa).

Residues 212–279 (EVAQIIRRLD…DLAKEKKQQM (68 aa)) adopt a coiled-coil conformation. A disordered region spans residues 345–419 (LQEKPSASSP…RGVAGEPEPL (75 aa)). Over residues 398–409 (AEVKEADSDVRR) the composition is skewed to basic and acidic residues. HEAT repeat units follow at residues 522–558 (THCVERAFPLLLARAGDSSARLRVMALNFIQEMALFK) and 603–639 (GFTVDNVMKFAVSALEHRVYEVRETAVRIILDMYRQH). Residues 678–730 (EAEVRAQKRVATKEAEKQKKEEMKALQGQSGELRETQAGVQEKESEAVKLRNQ) are a coiled coil. Basic and acidic residues-rich tracts occupy residues 690 to 701 (KEAEKQKKEEMK) and 718 to 729 (QEKESEAVKLRN). Disordered regions lie at residues 690-741 (KEAE…VLPD) and 885-926 (APQQ…YMRR). Positions 889–903 (GKGPAAAKSSTSAPK) are enriched in low complexity. The span at 916-926 (SKSSSRTYMRR) shows a compositional bias: polar residues.

Interacts with CCP110 and CEP97. Interacts with ARMC9, TOGARAM1, CCDC66 and CSPP1.

Its subcellular location is the cell projection. The protein resides in the cilium. The protein localises to the cytoplasm. It is found in the cytoskeleton. It localises to the microtubule organizing center. Its subcellular location is the centrosome. The protein resides in the centriole. The protein localises to the spindle pole. Its function is as follows. Required for ciliogenesis and for structural integrity at the ciliary tip. In Mus musculus (Mouse), this protein is Centrosomal protein of 104 kDa (Cep104).